The chain runs to 150 residues: UPF0336 protein SAV_4901 (150 aa).

The region spanning 8–126 is the MaoC-like domain; sequence VGRSYPPTDP…GNDVVDVRGE (119 aa).

This sequence belongs to the UPF0336 family.

In Streptomyces avermitilis (strain ATCC 31267 / DSM 46492 / JCM 5070 / NBRC 14893 / NCIMB 12804 / NRRL 8165 / MA-4680), this protein is UPF0336 protein SAV_4901.